A 104-amino-acid chain; its full sequence is MAGKTVTRADLTEAVYQRVGLSRTESAALVETVLSEICTCLASGETVKLSSFGSFVVRDKGKRVGRNPKTGVEVAIEPRRVMVFKPSNVLKARINGGAAEPDDE.

It belongs to the bacterial histone-like protein family. Heterodimer of an alpha and a beta chain.

In terms of biological role, this protein is one of the two subunits of integration host factor, a specific DNA-binding protein that functions in genetic recombination as well as in transcriptional and translational control. This chain is Integration host factor subunit alpha, found in Methylobacterium sp. (strain 4-46).